The sequence spans 166 residues: MAEVKPVTAVFPGTFDPFTRGHFSLVMRGIKTFHKVIVAVAGSTSKNTKFSLEERVDMAKRIFEHHPQVEVDSFDGLLVHYVEQSPANVIMRGLRAVSDFEYEFQMALMNRRLDNDIQTVFLMTDYKWMYLSSSIIKDVAVNGGDIKGLVPRQIYDEVIERLVPGK.

T14 contributes to the substrate binding site. Residues 14–15 (TF) and H22 contribute to the ATP site. Substrate is bound by residues K46, L78, and R92. ATP contacts are provided by residues 93–95 (GLR), E103, and 128–134 (WMYLSSS).

It belongs to the bacterial CoaD family. As to quaternary structure, homohexamer. It depends on Mg(2+) as a cofactor.

The protein localises to the cytoplasm. It carries out the reaction (R)-4'-phosphopantetheine + ATP + H(+) = 3'-dephospho-CoA + diphosphate. The protein operates within cofactor biosynthesis; coenzyme A biosynthesis; CoA from (R)-pantothenate: step 4/5. Functionally, reversibly transfers an adenylyl group from ATP to 4'-phosphopantetheine, yielding dephospho-CoA (dPCoA) and pyrophosphate. The chain is Phosphopantetheine adenylyltransferase from Maridesulfovibrio salexigens (strain ATCC 14822 / DSM 2638 / NCIMB 8403 / VKM B-1763) (Desulfovibrio salexigens).